Consider the following 241-residue polypeptide: MSMLCYTLIIAFLIGIWAAPKSEDNVPLGSPATSDLSDTSCAKTHEALKTSRNIDQHYPAPKKAEDQEFGSAANIIVDPKLFQKRRFQSPRVLFSTQPPPLSRDEQSVDNANSLNRNIRAKREDHPVHKRGEYSVCDSVNVWVANKTTATDIRGNLVTVMVDVNINNNVYKQYFFETKCRNPNPVPTGCRGIDARHWNSYCTTTNTFVKALTMEGNQASWRFIRIDSACVCVISRKNENFG.

The N-terminal stretch at 1 to 18 (MSMLCYTLIIAFLIGIWA) is a signal peptide. The propeptide occupies 19-122 (APKSEDNVPL…SLNRNIRAKR (104 aa)). Intrachain disulfides connect C136–C201, C179–C229, and C189–C231. A glycan (N-linked (GlcNAc...) asparagine) is linked at N145.

It belongs to the NGF-beta family. Homodimer; non-covalently linked. Expressed by the venom gland.

It is found in the secreted. In terms of biological role, nerve growth factor is important for the development and maintenance of the sympathetic and sensory nervous systems. It stimulates division and differentiation of sympathetic and embryonic sensory neurons as well as basal forebrain cholinergic neurons in the brain. Its relevance in the snake venom is not clear. However, it has been shown to inhibit metalloproteinase-dependent proteolysis of platelet glycoprotein Ib alpha, suggesting a metalloproteinase inhibition to prevent metalloprotease autodigestion and/or protection against prey proteases. Binds a lipid between the two protein chains in the homodimer. The lipid-bound form promotes histamine relase from mouse mast cells, contrary to the lipid-free form. The chain is Venom nerve growth factor from Crotalus durissus terrificus (South American rattlesnake).